Here is a 439-residue protein sequence, read N- to C-terminus: 26S proteasome regulatory subunit 6A (439 aa).

Met-1 is modified (N-acetylmethionine). Residue Ser-9 is modified to Phosphoserine. 227-234 is a binding site for ATP; sequence GPPGTGKT. Ser-376 bears the Phosphoserine mark.

It belongs to the AAA ATPase family. Component of the 19S proteasome regulatory particle complex. The 26S proteasome consists of a 20S core particle (CP) and two 19S regulatory subunits (RP). The regulatory particle is made of a lid composed of 9 subunits, a base containing 6 ATPases including PSMC3 and few additional components. Interacts with PAAF1. As to quaternary structure, (Microbial infection) Interacts with HIV-1 Tat. Sumoylated by UBE2I in response to MEKK1-mediated stimuli.

The protein localises to the cytoplasm. Its subcellular location is the nucleus. In terms of biological role, component of the 26S proteasome, a multiprotein complex involved in the ATP-dependent degradation of ubiquitinated proteins. This complex plays a key role in the maintenance of protein homeostasis by removing misfolded or damaged proteins, which could impair cellular functions, and by removing proteins whose functions are no longer required. Therefore, the proteasome participates in numerous cellular processes, including cell cycle progression, apoptosis, or DNA damage repair. PSMC3 belongs to the heterohexameric ring of AAA (ATPases associated with diverse cellular activities) proteins that unfolds ubiquitinated target proteins that are concurrently translocated into a proteolytic chamber and degraded into peptides. The chain is 26S proteasome regulatory subunit 6A (PSMC3) from Homo sapiens (Human).